The following is a 533-amino-acid chain: Bifunctional purine biosynthesis protein PurH (533 aa).

An MGS-like domain is found at 1–148 (MQPNRPIRQA…KNHQDVAIVV (148 aa)).

This sequence belongs to the PurH family.

It catalyses the reaction (6R)-10-formyltetrahydrofolate + 5-amino-1-(5-phospho-beta-D-ribosyl)imidazole-4-carboxamide = 5-formamido-1-(5-phospho-D-ribosyl)imidazole-4-carboxamide + (6S)-5,6,7,8-tetrahydrofolate. It carries out the reaction IMP + H2O = 5-formamido-1-(5-phospho-D-ribosyl)imidazole-4-carboxamide. The protein operates within purine metabolism; IMP biosynthesis via de novo pathway; 5-formamido-1-(5-phospho-D-ribosyl)imidazole-4-carboxamide from 5-amino-1-(5-phospho-D-ribosyl)imidazole-4-carboxamide (10-formyl THF route): step 1/1. It functions in the pathway purine metabolism; IMP biosynthesis via de novo pathway; IMP from 5-formamido-1-(5-phospho-D-ribosyl)imidazole-4-carboxamide: step 1/1. The sequence is that of Bifunctional purine biosynthesis protein PurH from Pasteurella multocida (strain Pm70).